The sequence spans 488 residues: Dipeptide and tripeptide permease B (488 aa).

The Cytoplasmic portion of the chain corresponds to 1–27 (MSKTASVGLWDQPKPFFMIFFVELWER). The helical transmembrane segment at 28–48 (FGFYGVQGILAIYFVQQLGFS) threads the bilayer. Residues 49 to 52 (EEQS) lie on the Periplasmic side of the membrane. A helical membrane pass occupies residues 53–73 (FITFGAFTALVYGLISVGGYV). Over 74–82 (GDHILGTKR) the chain is Cytoplasmic. Residues 83–103 (TIVLGAIVMAIGYYMIGLSIM) form a helical membrane-spanning segment. Residues 104–106 (KPE) lie on the Periplasmic side of the membrane. Residues 107–127 (LIFYALGTVAVGNGLFKANPA) form a helical membrane-spanning segment. At 128-146 (SLLAKCYQPQDPRLDGAFT) the chain is on the cytoplasmic side. Residues 147-167 (LFYMSINLGSLFSLSLAPVIA) traverse the membrane as a helical segment. At 168–172 (EKYGY) the chain is on the periplasmic side. Residues 173–193 (TVTYNICGIGLIIALLVYIAC) traverse the membrane as a helical segment. Residues 194 to 211 (RRMVHNIGSAPDHHPVKP) lie on the Cytoplasmic side of the membrane. Residues 212–232 (IGLIAVLIGSVVMVGVCAWLL) form a helical membrane-spanning segment. Over 233–234 (HN) the chain is Periplasmic. Residues 235–255 (IKVANIALFAITTIVVLIFFW) traverse the membrane as a helical segment. Over 256-267 (QAFKQNRVGRNK) the chain is Cytoplasmic. Residues 268–288 (MFVAFILMLQAVVFFILYNQM) traverse the membrane as a helical segment. Residues 289 to 311 (PMSLNFFAINNVHHQILGFDVNP) are Periplasmic-facing. The chain crosses the membrane as a helical span at residues 312 to 332 (VSFQAFNPFWIIIVSPILAVV). Residues 333–348 (YTKLGAKGKDFSMPAK) are Cytoplasmic-facing. The chain crosses the membrane as a helical span at residues 349–369 (FTFGMFLCSLGFLTAAASGLF). Topologically, residues 370–378 (ADAQGITSP) are periplasmic. The helical transmembrane segment at 379–399 (WFIVLVYLFQSVGELMISALG) threads the bilayer. Topologically, residues 400–423 (LAMVAAFVPSYLTGFILGMWFLSQ) are cytoplasmic. The helical transmembrane segment at 424-444 (AVASMLASHVAALTATPVGVT) threads the bilayer. Topologically, residues 445 to 455 (DPLQTLPIYMS) are periplasmic. The helical transmembrane segment at 456 to 476 (VFGKIGVATLIVAIIMTFMVP) threads the bilayer. The Cytoplasmic segment spans residues 477-488 (WLNRIMREEVKA).

The protein belongs to the major facilitator superfamily. Proton-dependent oligopeptide transporter (POT/PTR) (TC 2.A.17) family. DtpB subfamily.

The protein resides in the cell inner membrane. In terms of biological role, proton-dependent permease that transports di- and tripeptides. The chain is Dipeptide and tripeptide permease B from Xenorhabdus bovienii (strain SS-2004) (Xenorhabdus nematophila subsp. bovienii).